A 235-amino-acid polypeptide reads, in one-letter code: Purine nucleoside phosphorylase DeoD-type (235 aa).

An a purine D-ribonucleoside-binding site is contributed by His-4. Phosphate-binding positions include Gly-20, Arg-24, Arg-43, and 87–90; that span reads RVGT. A purine D-ribonucleoside contacts are provided by residues 180–182 and 204–205; these read EME and SD. Asp-205 (proton donor) is an active-site residue.

The protein belongs to the PNP/UDP phosphorylase family. In terms of assembly, homohexamer; trimer of homodimers.

The enzyme catalyses a purine D-ribonucleoside + phosphate = a purine nucleobase + alpha-D-ribose 1-phosphate. It catalyses the reaction a purine 2'-deoxy-D-ribonucleoside + phosphate = a purine nucleobase + 2-deoxy-alpha-D-ribose 1-phosphate. In terms of biological role, catalyzes the reversible phosphorolytic breakdown of the N-glycosidic bond in the beta-(deoxy)ribonucleoside molecules, with the formation of the corresponding free purine bases and pentose-1-phosphate. The chain is Purine nucleoside phosphorylase DeoD-type from Oceanobacillus iheyensis (strain DSM 14371 / CIP 107618 / JCM 11309 / KCTC 3954 / HTE831).